A 982-amino-acid chain; its full sequence is Nitrate reductase [NADPH] (982 aa).

Positions Met1–Leu128 are disordered. Residues Gln10–Gln20 show a composition bias toward basic and acidic residues. Low complexity predominate over residues Thr63–Ser110. A Mo-molybdopterin-binding site is contributed by Cys240. The region spanning Thr617–Thr692 is the Cytochrome b5 heme-binding domain. Residues His652 and His675 each contribute to the heme site. The 116-residue stretch at Lys721 to Gln836 folds into the FAD-binding FR-type domain. FAD is bound by residues Arg776–Thr779, Leu794–Tyr798, Gln810–Thr812, Ser860, and Thr863. Met952 to Met961 is a binding site for NADP(+).

This sequence belongs to the nitrate reductase family. In terms of assembly, homodimer. The cofactor is FAD. It depends on heme as a cofactor. Mo-molybdopterin serves as cofactor.

The enzyme catalyses nitrite + NADP(+) + H2O = nitrate + NADPH + H(+). It participates in nitrogen metabolism; nitrate reduction (assimilation). Functionally, nitrate reductase is a key enzyme involved in the first step of nitrate assimilation in plants, fungi and bacteria. The sequence is that of Nitrate reductase [NADPH] (nit-3) from Neurospora crassa (strain ATCC 24698 / 74-OR23-1A / CBS 708.71 / DSM 1257 / FGSC 987).